The sequence spans 440 residues: Transposon TyH3 Gag polyprotein (440 aa).

Composition is skewed to polar residues over residues Met-1–Ser-23, Thr-48–Ser-60, and Gln-127–Phe-152. Disordered stretches follow at residues Met-1–Gln-93, Pro-126–Pro-173, and Gly-352–Tyr-440. Over residues Thr-153–Thr-165 the composition is skewed to low complexity. The RNA-binding stretch occupies residues Asn-299–His-401. A compositionally biased stretch (low complexity) spans Asn-402–Ser-418. The residue at position 416 (Ser-416) is a Phosphoserine. Residues Lys-419 to Asn-428 show a composition bias toward polar residues. Positions Asn-429–Tyr-440 are enriched in basic and acidic residues.

In terms of assembly, homotrimer.

It localises to the cytoplasm. In terms of biological role, capsid protein (CA) is the structural component of the virus-like particle (VLP), forming the shell that encapsulates the retrotransposons dimeric RNA genome. The particles are assembled from trimer-clustered units and there are holes in the capsid shells that allow for the diffusion of macromolecules. CA also has nucleocapsid-like chaperone activity, promoting primer tRNA(i)-Met annealing to the multipartite primer-binding site (PBS), dimerization of Ty1 RNA and initiation of reverse transcription. The polypeptide is Transposon TyH3 Gag polyprotein (TY1A) (Saccharomyces cerevisiae (Baker's yeast)).